Consider the following 109-residue polypeptide: Mitochondrial pyruvate carrier 1 (109 aa).

Position 2 is an N-acetylalanine (Ala-2). Over 2 to 20 (AGALVRKAADYVRSKDFRD) the chain is Mitochondrial matrix. A helical transmembrane segment spans residues 21 to 41 (YLMSTHFWGPVANWGLPIAAI). Topologically, residues 42-52 (NDMKKSPEIIS) are mitochondrial intermembrane. Residues 53–71 (GRMTFALCCYSLTFMRFAY) traverse the membrane as a helical segment. An N6-acetyllysine modification is found at Lys-72. Topologically, residues 72 to 109 (KVQPRNWLLFACHVTNEVAQLIQGGRLINYEMSKRPSA) are mitochondrial matrix.

It belongs to the mitochondrial pyruvate carrier (MPC) (TC 2.A.105) family. As to quaternary structure, homodimer. Forms heterodimer with MPC2. The heterodimer is the more stable and dominant form.

The protein localises to the mitochondrion inner membrane. The catalysed reaction is pyruvate(out) + H(+)(out) = pyruvate(in) + H(+)(in). In terms of biological role, mediates the uptake of pyruvate into mitochondria. This is Mitochondrial pyruvate carrier 1 (Mpc1) from Mus musculus (Mouse).